The chain runs to 244 residues: Triosephosphate isomerase (244 aa).

8 to 10 (NWK) lines the substrate pocket. His-93 serves as the catalytic Electrophile. The active-site Proton acceptor is Glu-161. Residues Gly-167, Ser-206, and 227–228 (GG) each bind substrate.

This sequence belongs to the triosephosphate isomerase family. Homodimer.

It localises to the cytoplasm. The catalysed reaction is D-glyceraldehyde 3-phosphate = dihydroxyacetone phosphate. It participates in carbohydrate biosynthesis; gluconeogenesis. It functions in the pathway carbohydrate degradation; glycolysis; D-glyceraldehyde 3-phosphate from glycerone phosphate: step 1/1. In terms of biological role, involved in the gluconeogenesis. Catalyzes stereospecifically the conversion of dihydroxyacetone phosphate (DHAP) to D-glyceraldehyde-3-phosphate (G3P). This chain is Triosephosphate isomerase, found in Deinococcus radiodurans (strain ATCC 13939 / DSM 20539 / JCM 16871 / CCUG 27074 / LMG 4051 / NBRC 15346 / NCIMB 9279 / VKM B-1422 / R1).